Here is a 379-residue protein sequence, read N- to C-terminus: Pectin lyase A (379 aa).

The first 20 residues, 1–20 (MKYSTIFSAAAAVFAGSAAA), serve as a signal peptide directing secretion. 2 disulfide bridges follow: Cys83–Cys102 and Cys92–Cys226. Thr88 carries O-linked (Man) threonine glycosylation. Residue Asn129 is glycosylated (N-linked (GlcNAc...) asparagine). Residue Arg256 is part of the active site. An intrachain disulfide couples Cys322 to Cys330. O-linked (Man) serine; in strain 4M-147 glycosylation is present at Ser368.

Belongs to the polysaccharide lyase 1 family. Post-translationally, N-glycosylated at Asn-129 and O-glycosylated at Thr-88 when expressed in Aspergillus nidulans. The protein from strain 4M-147 is O-glycosylated at Thr-88 and Ser-368. PubMed:9195887 modeled GalNAc at the O-glycosylation site, a glycosylation not observed in fungi. The O-linked saccharide is probably mannose.

The protein localises to the secreted. The catalysed reaction is Eliminative cleavage of (1-&gt;4)-alpha-D-galacturonan methyl ester to give oligosaccharides with 4-deoxy-6-O-methyl-alpha-D-galact-4-enuronosyl groups at their non-reducing ends.. Functionally, pectinolytic enzymes consist of four classes of enzymes: pectin lyase, polygalacturonase, pectin methylesterase and rhamnogalacturonase. Among pectinolytic enzymes, pectin lyase is the most important in depolymerization of pectin, since it cleaves internal glycosidic bonds of highly methylated pectins. The protein is Pectin lyase A (pelA) of Aspergillus niger.